The primary structure comprises 513 residues: ATP synthase subunit alpha (513 aa).

169 to 176 lines the ATP pocket; it reads GDRQTGKT.

The protein belongs to the ATPase alpha/beta chains family. F-type ATPases have 2 components, CF(1) - the catalytic core - and CF(0) - the membrane proton channel. CF(1) has five subunits: alpha(3), beta(3), gamma(1), delta(1), epsilon(1). CF(0) has three main subunits: a(1), b(2) and c(9-12). The alpha and beta chains form an alternating ring which encloses part of the gamma chain. CF(1) is attached to CF(0) by a central stalk formed by the gamma and epsilon chains, while a peripheral stalk is formed by the delta and b chains.

The protein localises to the cell inner membrane. It catalyses the reaction ATP + H2O + 4 H(+)(in) = ADP + phosphate + 5 H(+)(out). In terms of biological role, produces ATP from ADP in the presence of a proton gradient across the membrane. The alpha chain is a regulatory subunit. The chain is ATP synthase subunit alpha from Salmonella arizonae (strain ATCC BAA-731 / CDC346-86 / RSK2980).